A 135-amino-acid chain; its full sequence is Large ribosomal subunit protein uL16c (135 aa).

The protein belongs to the universal ribosomal protein uL16 family. In terms of assembly, part of the 50S ribosomal subunit.

It localises to the plastid. It is found in the chloroplast. The polypeptide is Large ribosomal subunit protein uL16c (Phaseolus vulgaris (Kidney bean)).